Here is a 725-residue protein sequence, read N- to C-terminus: Palmitoyltransferase AKR1 (725 aa).

The Cytoplasmic segment spans residues 1–303; sequence MGTIAMASIN…LKDKRSFVTR (303 aa). 5 ANK repeats span residues 84–113, 118–147, 151–180, 184–213, and 217–246; these read EGIT…EINR, SIAT…DPLV, QGYN…PVDV, FGHT…SVHA, and QGFT…DRFA. The helical transmembrane segment at 304 to 324 threads the bilayer; the sequence is FLFFWPFVLVWAMLVAMSSAP. Residues 325 to 326 lie on the Lumenal side of the membrane; that stretch reads VY. A helical transmembrane segment spans residues 327–347; sequence IGVPLGIAAVYAIQWVAQQVL. Residues 348 to 364 are Cytoplasmic-facing; that stretch reads EYAPSDMRHFHKTPWLT. Residues 365-385 form a helical membrane-spanning segment; sequence GIFAATLFWTGVNWLTTVLFA. Topologically, residues 386 to 397 are lumenal; that stretch reads TTLGAPEGKGHG. Residues 398–418 traverse the membrane as a helical segment; the sequence is ILNFLFALFFGFTVYFYIASM. The Cytoplasmic portion of the chain corresponds to 419-495; the sequence is RYDPGFVPKM…NCVGINNHRH (77 aa). A DHHC domain is found at 451-501; sequence NFCVTCMIQTPLRSKHCRRCQRCVAKHDHHCPWVYNCVGINNHRHFFFYLI. The active-site S-palmitoyl cysteine intermediate is the cysteine 481. A helical membrane pass occupies residues 496–516; the sequence is FFFYLISLTMGIVSYDFLLYY. Topologically, residues 517-547 are lumenal; that stretch reads YFDTVSKNASETCNVLSPTLCKYINADSYTS. The chain crosses the membrane as a helical span at residues 548–568; that stretch reads ILAIWITMQLLWVTMLLFTQF. Residues 569-725 are Cytoplasmic-facing; that stretch reads IQVARAMTTY…YEAVGTEDVV (157 aa).

Belongs to the DHHC palmitoyltransferase family. AKR/ZDHHC17 subfamily.

Its subcellular location is the early endosome membrane. The protein localises to the golgi apparatus membrane. The catalysed reaction is L-cysteinyl-[protein] + hexadecanoyl-CoA = S-hexadecanoyl-L-cysteinyl-[protein] + CoA. Palmitoyltransferase specific for casein kinase 1. This is Palmitoyltransferase AKR1 (AKR1) from Gibberella zeae (strain ATCC MYA-4620 / CBS 123657 / FGSC 9075 / NRRL 31084 / PH-1) (Wheat head blight fungus).